The sequence spans 138 residues: MSMMKEFREFAMRGNVVDLAVGVIIGAAFGKIVSSFVADIIMPPLGLLIGGVDFKQFHLVLREAQGAVPAVVMNYGSFIQTIFDFVIVAFAIFLAIKLMNKVRRKQEEAPAAPPAPTAEEKLLTEIRDLLSQQQQPKL.

A run of 2 helical transmembrane segments spans residues 10-30 (FAMR…AAFG) and 76-96 (GSFI…FLAI).

Belongs to the MscL family. Homopentamer.

It is found in the cell inner membrane. Functionally, channel that opens in response to stretch forces in the membrane lipid bilayer. May participate in the regulation of osmotic pressure changes within the cell. The polypeptide is Large-conductance mechanosensitive channel (Serratia proteamaculans (strain 568)).